The primary structure comprises 484 residues: Membrane-bound lytic murein transglycosylase F (484 aa).

Positions 1–18 (MKGLLLRIIAAFALVLWA) are cleaved as a signal peptide. The non-LT domain stretch occupies residues 19-267 (IDMVFPWQQM…RIEEKYFNHF (249 aa)). Positions 268 to 484 (SQFDYVDMRQ…PLTDNQEKQE (217 aa)) are LT domain. The active site involves glutamate 312. Residues 459–484 (ADNKDKPSETDENLPLPLTDNQEKQE) are disordered.

This sequence in the N-terminal section; belongs to the bacterial solute-binding protein 3 family. It in the C-terminal section; belongs to the transglycosylase Slt family.

It is found in the cell outer membrane. It catalyses the reaction Exolytic cleavage of the (1-&gt;4)-beta-glycosidic linkage between N-acetylmuramic acid (MurNAc) and N-acetylglucosamine (GlcNAc) residues in peptidoglycan, from either the reducing or the non-reducing ends of the peptidoglycan chains, with concomitant formation of a 1,6-anhydrobond in the MurNAc residue.. Its function is as follows. Murein-degrading enzyme that degrades murein glycan strands and insoluble, high-molecular weight murein sacculi, with the concomitant formation of a 1,6-anhydromuramoyl product. Lytic transglycosylases (LTs) play an integral role in the metabolism of the peptidoglycan (PG) sacculus. Their lytic action creates space within the PG sacculus to allow for its expansion as well as for the insertion of various structures such as secretion systems and flagella. The chain is Membrane-bound lytic murein transglycosylase F from Mannheimia succiniciproducens (strain KCTC 0769BP / MBEL55E).